Consider the following 552-residue polypeptide: Autoimmune regulator (552 aa).

Residues 1–106 (MAGGDGMLRR…ILDGFPKDVD (106 aa)) form the HSR domain. 2 short sequence motifs (LXXLL motif) span residues 8–12 (LRRLL) and 64–68 (LSWLL). The segment at 109–177 (QSRKGRKPLA…DGNLESQHLP (69 aa)) is disordered. Residues 114–134 (RKPLAGPKAAVLPPRPPTKRK) carry the Nuclear localization signal motif. The region spanning 182–282 (IQTMAASVQR…QKVGQQCGVP (101 aa)) is the SAND domain. Residues 298–345 (EDECAVCHDGGELICCDGCPRAFHLACLSPPLQEIPSGLWRCSCCLQG) form a PHD-type 1 zinc finger. An LXXLL motif 3 motif is present at residues 414 to 418 (LCPLL). The PHD-type 2 zinc finger occupies 434 to 475 (CSVCGDGTEVLRCAHCAAAFHWRCHFPTAAARPGTNLRCKSC). Positions 472-514 (CKSCSADSTPTPGTPGEAVPTSGPRPAPGLAKVGDDSASHDPV) are disordered. The span at 504-514 (VGDDSASHDPV) shows a compositional bias: basic and acidic residues. The short motif at 520-524 (LESLL) is the LXXLL motif 4 element.

In terms of assembly, homodimer and homotetramer. Interacts with CREBBP. Interacts preferentially with histone H3 that is not methylated at 'Lys-4'. Binds with lower affinity to histone H3 that is monomethylated at 'Lys-4'. Trimethylation of histone H3 at 'Lys-4' or phosphorylation at 'Thr-3' abolish the interaction. Binds with lower affinity to histone H3 that is acetylated at 'Lys-4', or that is acetylated at 'Lys-9' or trimethylated at 'Lys-9'. Binds histone H3 that is dimethylated at 'Arg-2' with very low affinity. Phosphorylated. Highly expressed in a few cells in the medulla of the thymus (medullary epithelial cells) (at protein level). Expressed in thymic but no peripheral B-cells. In secondary lymphoid organs, expressed in a discrete population of bone marrow-derived toleregenic antigen presenting cells (APCs) called extrathymic AIRE expressing cells (eTAC)(at protein level). Detected at very low levels in thymus, lymph node, liver, brain, ovary, lung, testis, kidney, heart, spleen, bone marrow, skeletal muscle and adrenal gland. Isoforms 1a to 1d predominate, isoforms 2a to 2d are intermediate and isoforms 3a to 3d are expressed at extremely low levels.

It localises to the nucleus. The protein resides in the cytoplasm. Its function is as follows. Transcription factor playing an essential role to promote self-tolerance in the thymus by regulating the expression of a wide array of self-antigens that have the commonality of being tissue-restricted in their expression pattern in the periphery, called tissue restricted antigens (TRA). Binds to G-doublets in an A/T-rich environment; the preferred motif is a tandem repeat of 5'-. ATTGGTTA-3' combined with a 5'-TTATTA-3' box. Binds to nucleosomes. Binds to chromatin and interacts selectively with histone H3 that is not methylated at 'Lys-4', not phosphorylated at 'Thr-3' and not methylated at 'Arg-2'. Functions as a sensor of histone H3 modifications that are important for the epigenetic regulation of gene expression. Mainly expressed by medullary thymic epithelial cells (mTECs), induces the expression of thousands of tissue-restricted proteins, which are presented on major histocompatibility complex class I (MHC-I) and MHC-II molecules to developing T-cells percolating through the thymic medulla. Also induces self-tolerance through other mechanisms such as the regulation of the mTEC differentiation program. Controls the medullary accumulation of thymic dendritic cells and the development of regulatory T-cell through the regulation of XCL1 expression. Regulates the production of CCR4 and CCR7 ligands in medullary thymic epithelial cells and alters the coordinated maturation and migration of thymocytes. In thimic B-cells, allows the presentation of licensing-dependent endogenous self-anitgen for negative selection. In secondary lymphoid organs, induces functional inactivation of CD4(+) T-cells. Expressed by a distinct bone marrow-derived population, induces self-tolerance through a mechanism that does not require regulatory T-cells and is resitant to innate inflammatory stimuli. The protein is Autoimmune regulator (Aire) of Mus musculus (Mouse).